Reading from the N-terminus, the 166-residue chain is MVLASSTTSIHTMLLLLLMLFHLGLQASISGRDTHRLTRTLNCSSIVKEIIGKLPEPELKTDDEGPSLRNKSFRRVNLSKFVESQGEVDPEDRYVIKSNLQKLNCCLPTSANDSALPGVFIRDLDDFRKKLRFYMVHLNDLETVLTSRPPQPASGSVSPNRGTVEC.

Positions 1 to 26 (MVLASSTTSIHTMLLLLLMLFHLGLQ) are cleaved as a signal peptide. N-linked (GlcNAc...) asparagine glycosylation occurs at Asn42. Disulfide bonds link Cys43-Cys106 and Cys105-Cys166. Residue Asn112 is glycosylated (N-linked (GlcNAc...) asparagine; partial). Residues 145–166 (LTSRPPQPASGSVSPNRGTVEC) are disordered.

This sequence belongs to the IL-3 family. As to quaternary structure, monomer. In terms of tissue distribution, activated T-cells, mast cells, natural killer cells.

The protein resides in the secreted. In terms of biological role, cytokine secreted predominantly by activated T-lymphocytes as well as mast cells and osteoblastic cells that controls the production and differentiation of hematopoietic progenitor cells into lineage-restricted cells. Also stimulates mature basophils, eosinophils, and monocytes to become functionally activated. In addition, plays an important role in neural cell proliferation and survival. Participates as well in bone homeostasis and inhibits osteoclast differentiation by preventing NF-kappa-B nuclear translocation and activation. Mechanistically, exerts its biological effects through a receptor composed of IL3RA subunit and a signal transducing subunit IL3RB. Receptor stimulation results in the rapid activation of JAK2 kinase activity leading to STAT5-mediated transcriptional program. Alternatively, contributes to cell survival under oxidative stress in non-hematopoietic systems by activating pathways mediated by PI3K/AKT and ERK. In Mus musculus (Mouse), this protein is Interleukin-3 (Il3).